The chain runs to 491 residues: Bifunctional protein HldE (491 aa).

Positions Met1 to Ser330 are ribokinase. Asn205 to Glu208 provides a ligand contact to ATP. Asp275 is an active-site residue. Residues Phe356–Gln491 are cytidylyltransferase.

This sequence in the N-terminal section; belongs to the carbohydrate kinase PfkB family. It in the C-terminal section; belongs to the cytidylyltransferase family. Homodimer.

The enzyme catalyses D-glycero-beta-D-manno-heptose 7-phosphate + ATP = D-glycero-beta-D-manno-heptose 1,7-bisphosphate + ADP + H(+). It catalyses the reaction D-glycero-beta-D-manno-heptose 1-phosphate + ATP + H(+) = ADP-D-glycero-beta-D-manno-heptose + diphosphate. The protein operates within nucleotide-sugar biosynthesis; ADP-L-glycero-beta-D-manno-heptose biosynthesis; ADP-L-glycero-beta-D-manno-heptose from D-glycero-beta-D-manno-heptose 7-phosphate: step 1/4. It participates in nucleotide-sugar biosynthesis; ADP-L-glycero-beta-D-manno-heptose biosynthesis; ADP-L-glycero-beta-D-manno-heptose from D-glycero-beta-D-manno-heptose 7-phosphate: step 3/4. Functionally, catalyzes the phosphorylation of D-glycero-D-manno-heptose 7-phosphate at the C-1 position to selectively form D-glycero-beta-D-manno-heptose-1,7-bisphosphate. Catalyzes the ADP transfer from ATP to D-glycero-beta-D-manno-heptose 1-phosphate, yielding ADP-D-glycero-beta-D-manno-heptose. In Trichlorobacter lovleyi (strain ATCC BAA-1151 / DSM 17278 / SZ) (Geobacter lovleyi), this protein is Bifunctional protein HldE.